An 880-amino-acid chain; its full sequence is DNA gyrase subunit A (880 aa).

Residues 35–530 (LPDVRDGLKP…ASGDIDLEDL (496 aa)) enclose the Topo IIA-type catalytic domain. Tyrosine 123 (O-(5'-phospho-DNA)-tyrosine intermediate) is an active-site residue. Residues 557–563 (QRRGGKG) carry the GyrA-box motif.

This sequence belongs to the type II topoisomerase GyrA/ParC subunit family. As to quaternary structure, heterotetramer, composed of two GyrA and two GyrB chains. In the heterotetramer, GyrA contains the active site tyrosine that forms a transient covalent intermediate with DNA, while GyrB binds cofactors and catalyzes ATP hydrolysis.

The protein localises to the cytoplasm. It carries out the reaction ATP-dependent breakage, passage and rejoining of double-stranded DNA.. A type II topoisomerase that negatively supercoils closed circular double-stranded (ds) DNA in an ATP-dependent manner to modulate DNA topology and maintain chromosomes in an underwound state. Negative supercoiling favors strand separation, and DNA replication, transcription, recombination and repair, all of which involve strand separation. Also able to catalyze the interconversion of other topological isomers of dsDNA rings, including catenanes and knotted rings. Type II topoisomerases break and join 2 DNA strands simultaneously in an ATP-dependent manner. The chain is DNA gyrase subunit A from Haemophilus influenzae (strain ATCC 51907 / DSM 11121 / KW20 / Rd).